Here is a 718-residue protein sequence, read N- to C-terminus: Phenylalanine--tRNA ligase beta subunit (718 aa).

Residues 39-153 (LNEISGIKFG…IFDLESNPLK (115 aa)) enclose the tRNA-binding domain. The region spanning 386 to 460 (SKKTFLDLNY…RFYGLEKLKD (75 aa)) is the B5 domain. Mg(2+) is bound by residues D438, D444, and D448.

This sequence belongs to the phenylalanyl-tRNA synthetase beta subunit family. Type 1 subfamily. As to quaternary structure, tetramer of two alpha and two beta subunits. It depends on Mg(2+) as a cofactor.

It is found in the cytoplasm. The catalysed reaction is tRNA(Phe) + L-phenylalanine + ATP = L-phenylalanyl-tRNA(Phe) + AMP + diphosphate + H(+). This chain is Phenylalanine--tRNA ligase beta subunit, found in Mesomycoplasma hyopneumoniae (strain 232) (Mycoplasma hyopneumoniae).